The following is a 404-amino-acid chain: Argininosuccinate synthase (404 aa).

Residues 11-19 (AYSGGLDTS) and Ala38 each bind ATP. The L-citrulline site is built by Tyr91 and Ser96. Gly121 contacts ATP. The L-aspartate site is built by Thr123, Asn127, and Asp128. L-citrulline is bound at residue Asn127. 5 residues coordinate L-citrulline: Arg131, Ser182, Ser191, Glu267, and Tyr279.

Belongs to the argininosuccinate synthase family. Type 1 subfamily. In terms of assembly, homotetramer.

It is found in the cytoplasm. The catalysed reaction is L-citrulline + L-aspartate + ATP = 2-(N(omega)-L-arginino)succinate + AMP + diphosphate + H(+). It functions in the pathway amino-acid biosynthesis; L-arginine biosynthesis; L-arginine from L-ornithine and carbamoyl phosphate: step 2/3. This chain is Argininosuccinate synthase, found in Paramagnetospirillum magneticum (strain ATCC 700264 / AMB-1) (Magnetospirillum magneticum).